Reading from the N-terminus, the 494-residue chain is UPF0371 protein SPy_1343/M5005_Spy1095 (494 aa).

This sequence belongs to the UPF0371 family.

This is UPF0371 protein SPy_1343/M5005_Spy1095 from Streptococcus pyogenes serotype M1.